The primary structure comprises 199 residues: CASP-like protein 4B1 (199 aa).

The tract at residues 1 to 32 (MAMVASPDDIVKSPLPPPPPPPPPPLPPAHKD) is disordered. The Cytoplasmic portion of the chain corresponds to 1 to 53 (MAMVASPDDIVKSPLPPPPPPPPPPLPPAHKDKAAYNPYSGCPAHGGDDGLDG). The span at 14-28 (PLPPPPPPPPPPLPP) shows a compositional bias: pro residues. Residues 54-74 (IVLVLRAAAALLALVAMALVA) form a helical membrane-spanning segment. The Extracellular portion of the chain corresponds to 75-91 (SCRHGDWMEFTRYQEYR). Residues 92–112 (YLLGVAVVASLYSALQAARTF) form a helical membrane-spanning segment. Topologically, residues 113-127 (RRMRAGTAYAATFLD) are cytoplasmic. Residues 128–148 (FAGDQAVGYLLITASSAALPI) form a helical membrane-spanning segment. Residues 149–163 (TIRMRSAVVNTFTDV) are Extracellular-facing. A helical transmembrane segment spans residues 164 to 184 (VAASISFAFLAFAALAFSALI). At 185–199 (AGFRLSSSSSSAYNY) the chain is on the cytoplasmic side.

The protein belongs to the Casparian strip membrane proteins (CASP) family. In terms of assembly, homodimer and heterodimers.

Its subcellular location is the cell membrane. The polypeptide is CASP-like protein 4B1 (Oryza sativa subsp. japonica (Rice)).